A 567-amino-acid chain; its full sequence is DNA ligase B (567 aa).

Residue lysine 132 is the N6-AMP-lysine intermediate of the active site.

It belongs to the NAD-dependent DNA ligase family. LigB subfamily.

The enzyme catalyses NAD(+) + (deoxyribonucleotide)n-3'-hydroxyl + 5'-phospho-(deoxyribonucleotide)m = (deoxyribonucleotide)n+m + AMP + beta-nicotinamide D-nucleotide.. Catalyzes the formation of phosphodiester linkages between 5'-phosphoryl and 3'-hydroxyl groups in double-stranded DNA using NAD as a coenzyme and as the energy source for the reaction. The chain is DNA ligase B from Yersinia pestis bv. Antiqua (strain Angola).